Here is a 590-residue protein sequence, read N- to C-terminus: AT-rich interactive domain-containing protein 5A (590 aa).

The disordered stretch occupies residues 1–52 (MAAPPAKGNTEQSEEGDLPQLPVSPKPDDEQSRSQSPTQLQDSPEAGGEQEE). The segment at 1-294 (MAAPPAKGNT…NKDIQDSPQN (294 aa)) is interaction with SOX9. The residue at position 24 (Ser24) is a Phosphoserine. The segment covering 33–42 (RSQSPTQLQD) has biased composition (polar residues). The ARID domain maps to 50–142 (QEEEQAFLVS…LVLPYVRHLK (93 aa)). Glycyl lysine isopeptide (Lys-Gly) (interchain with G-Cter in ubiquitin) cross-links involve residues Lys80 and Lys89. Positions 141-229 (LKGEDDKPLP…SGPSPPLTGA (89 aa)) are disordered. Residues 160–186 (MAKELRGDDGTTEKLKKAKDSEERRVE) show a composition bias toward basic and acidic residues. The span at 187-210 (QTTPGKTKSDATGQTQLPCQGSSR) shows a compositional bias: polar residues. Ser253 and Ser283 each carry phosphoserine. Disordered stretches follow at residues 275–323 (EGCR…RMEA), 367–402 (GPPG…TRKR), and 419–443 (VPTE…RGLE). Basic and acidic residues predominate over residues 367–381 (GPPGKEEGPTTKESH). Residues Ser433 and Ser458 each carry the phosphoserine modification.

In terms of assembly, interacts with SOX9. Interacts with ESR1. Interacts with RORC. In terms of processing, phosphorylated by MAPK14 on serine residues involving a TLR4 signaling pathway upon lipopolysaccharide (LPS) stimulation leading to its ubiquitination and proteasomal degradation. Post-translationally, ubiquitinated leading to proteasomal degradation; involving WWP1 linked to MAPK14-mediated phosphorylation upon LPS stimulation. As to expression, expressed in T cells (at protein level). Expressed at high levels in cartilage, heart, testis and bone.

The protein localises to the nucleus. DNA-binding protein that may regulate transcription and act as a repressor by binding to AT-rich stretches in the promoter region of target genes. May positively regulate chondrocyte-specific transcription such as of COL2A1 in collaboration with SOX9 and positively regulate histone H3 acetylation at chondrocyte-specific genes. May stimulate early-stage chondrocyte differentiation and inhibit later stage differention. Can repress ESR1-mediated transcriptional activation; proposed to act as corepressor for selective nuclear hormone receptors. As an RNA-binding protein, involved in the regulation of inflammatory response by stabilizing selective inflammation-related mRNAs, such as STAT3 and TBX21. Also stabilizes IL6 mRNA. Binds to stem loop structures located in the 3'UTRs of IL6, STAT3 and TBX21 mRNAs; at least for STAT3 prevents binding of ZC3H12A to the mRNA stem loop structure thus inhibiting its degradation activity. Contributes to elevated IL6 levels possibly implicated in autoimmunity processes. IL6-dependent stabilization of STAT3 mRNA may promote differentiation of naive CD4+ T-cells into T-helper Th17 cells. In CD4+ T-cells may also inhibit RORC-induced Th17 cell differentiation independently of IL6 signaling. Stabilization of TBX21 mRNA contributes to elevated interferon-gamma secretion in Th1 cells possibly implicated in the establishment of septic shock. Stabilizes TNFRSF4/OX40 mRNA by binding to the conserved stem loop structure in its 3'UTR; thereby competing with the mRNA-destabilizing functions of RC3H1 and endoribonuclease ZC3H12A. In Mus musculus (Mouse), this protein is AT-rich interactive domain-containing protein 5A (Arid5a).